Here is a 187-residue protein sequence, read N- to C-terminus: GMP synthase [glutamine-hydrolyzing] subunit A (187 aa).

The 187-residue stretch at 1–187 (MILIIDNHGQ…KNFAKLCGEL (187 aa)) folds into the Glutamine amidotransferase type-1 domain. Residue cysteine 76 is the Nucleophile of the active site. Active-site residues include histidine 164 and glutamate 166.

As to quaternary structure, heterodimer composed of a glutamine amidotransferase subunit (A) and a GMP-binding subunit (B).

It catalyses the reaction XMP + L-glutamine + ATP + H2O = GMP + L-glutamate + AMP + diphosphate + 2 H(+). Its pathway is purine metabolism; GMP biosynthesis; GMP from XMP (L-Gln route): step 1/1. Catalyzes the synthesis of GMP from XMP. This Methanopyrus kandleri (strain AV19 / DSM 6324 / JCM 9639 / NBRC 100938) protein is GMP synthase [glutamine-hydrolyzing] subunit A.